Consider the following 722-residue polypeptide: MAR-binding filament-like protein 1-1 (722 aa).

The interval 1–20 (MGSSCFPQSPLSHSLFSSSS) is disordered. A chloroplast-targeting transit peptide spans 1–50 (MGSSCFPQSPLSHSLFSSSSLSSSQFTPLLFSPRNAQKCKKKMPAMACIH). The transit peptide at 51-84 (SENQKESEFCSRRTILFVGFSVLPLLSLRANAFE) directs the protein to the thylakoid. Over 85-112 (GLSVDSQVKAQPQKEETEQTIQGNAENP) the chain is Lumenal, thylakoid. A helical transmembrane segment spans residues 113-133 (FFSLLNGLGVFGSGVLGSLYA). The Stromal portion of the chain corresponds to 134–722 (LARNEKAVSD…TQPASQQESS (589 aa)). The stretch at 146-679 (IESMKNKLKE…KGEILRLRTQ (534 aa)) forms a coiled coil. The segment at 687 to 722 (VNNEEKVEAGEKAAVTVKRTRRRKTATQPASQQESS) is disordered. Residues 705–712 (RTRRRKTA) carry the Nuclear localization signal motif.

As to quaternary structure, interacts with PTST2; the interaction is essential for the initiation of starch granules biosynthesis in leaf chloroplasts, for the correct location of the process in the stromal spaces between the thylakoid membranes, and for the association of PTST2 with the thylakoid membranes. In terms of processing, predicted to be translocated into the thylakoid by the Tat system.

The protein localises to the plastid. It localises to the chloroplast. The protein resides in the chloroplast thylakoid membrane. Its subcellular location is the chloroplast stroma. It is found in the chloroplast nucleoid. The protein localises to the nucleus. It localises to the nucleus matrix. Its function is as follows. Required for the initiation of starch granules biosynthesis in leaf chloroplasts. Anchored to the thylakoid membranes with its C-terminus facing into the stroma where it is essential for localizing PTST2 and SS4 to the stromal spaces between the thylakoid membranes in order to begin starch granule formation. Associated with leaf chloroplastic nucleoids in vivo. Binds to various chloroplastic double-stranded DNA fragments without particular sequence specificity in vitro. May function at the interface between nucleoids and thylakoids possibly by anchoring nucleoids to the thylakoid membrane system in mature chloroplasts. Likely to participate in nuclear architecture by connecting chromatin with the nuclear matrix and potentially with the nuclear envelope. The protein is MAR-binding filament-like protein 1-1 of Nicotiana tabacum (Common tobacco).